Reading from the N-terminus, the 81-residue chain is ATP synthase subunit c, chloroplastic (81 aa).

2 helical membrane-spanning segments follow: residues 3–23 and 57–77; these read PLIS…ASIG and LAFM…LLFA.

It belongs to the ATPase C chain family. F-type ATPases have 2 components, F(1) - the catalytic core - and F(0) - the membrane proton channel. F(1) has five subunits: alpha(3), beta(3), gamma(1), delta(1), epsilon(1). F(0) has four main subunits: a(1), b(1), b'(1) and c(10-14). The alpha and beta chains form an alternating ring which encloses part of the gamma chain. F(1) is attached to F(0) by a central stalk formed by the gamma and epsilon chains, while a peripheral stalk is formed by the delta, b and b' chains.

It is found in the plastid. Its subcellular location is the chloroplast thylakoid membrane. In terms of biological role, f(1)F(0) ATP synthase produces ATP from ADP in the presence of a proton or sodium gradient. F-type ATPases consist of two structural domains, F(1) containing the extramembraneous catalytic core and F(0) containing the membrane proton channel, linked together by a central stalk and a peripheral stalk. During catalysis, ATP synthesis in the catalytic domain of F(1) is coupled via a rotary mechanism of the central stalk subunits to proton translocation. Its function is as follows. Key component of the F(0) channel; it plays a direct role in translocation across the membrane. A homomeric c-ring of between 10-14 subunits forms the central stalk rotor element with the F(1) delta and epsilon subunits. This is ATP synthase subunit c, chloroplastic from Ipomoea purpurea (Common morning glory).